Here is a 170-residue protein sequence, read N- to C-terminus: Large ribosomal subunit protein uL10 (170 aa).

Belongs to the universal ribosomal protein uL10 family. As to quaternary structure, part of the ribosomal stalk of the 50S ribosomal subunit. The N-terminus interacts with L11 and the large rRNA to form the base of the stalk. The C-terminus forms an elongated spine to which L12 dimers bind in a sequential fashion forming a multimeric L10(L12)X complex.

Its function is as follows. Forms part of the ribosomal stalk, playing a central role in the interaction of the ribosome with GTP-bound translation factors. The chain is Large ribosomal subunit protein uL10 (rplJ) from Chlamydia pneumoniae (Chlamydophila pneumoniae).